The sequence spans 467 residues: MEKISRTKIVDLMKREDFGAMVNVKGWVRTRRGSKQVNFIALNDGSTINNVQVVVDLANFDEEMLKQITTGACLSVNGVLTESVGAGQKAEVQAREIEVLGTCDNTYPLQKKGHSMEFLREIAHLRPRTNTFGAVFRIRHNMAIAIHKFFHEKGFFYFHTPIITASDCEGAGQMFQVTTMNLYDLKKDANGSIVYDDDFFGKQASLTVSGQLEGELAATALGAIYTFGPTFRAENSNTPRHLAEFWMIEPEVAFNEIQENMDLAEEFIKYCVRWALDNCADDVKFLNDMFDKGLIERLEGVLKEDFVRLPYTEGIKILEEAVAKGHKFEFPVYWGVDLASEHERYLVEDHFKRPVILTDYPKEIKAFYMKQNEDGKTVRAMDVLFPKIGEIIGGSERESDYNKLMTRIEEMHIPMKDMWWYLDTRKFGTCPHSGFGLGFERLLLFVTGMSNIRDVIPFPRTPRNADF.

The protein belongs to the class-II aminoacyl-tRNA synthetase family. Homodimer.

It is found in the cytoplasm. The catalysed reaction is tRNA(Asn) + L-asparagine + ATP = L-asparaginyl-tRNA(Asn) + AMP + diphosphate + H(+). This Bacteroides fragilis (strain ATCC 25285 / DSM 2151 / CCUG 4856 / JCM 11019 / LMG 10263 / NCTC 9343 / Onslow / VPI 2553 / EN-2) protein is Asparagine--tRNA ligase.